Here is a 320-residue protein sequence, read N- to C-terminus: GMP reductase (320 aa).

Cysteine 174 acts as the Thioimidate intermediate in catalysis. 203–226 (IIADGGLRVNGDIAKSIRFGATMC) is an NADP(+) binding site.

The protein belongs to the IMPDH/GMPR family. GuaC type 2 subfamily.

The enzyme catalyses IMP + NH4(+) + NADP(+) = GMP + NADPH + 2 H(+). In terms of biological role, catalyzes the irreversible NADPH-dependent deamination of GMP to IMP. It functions in the conversion of nucleobase, nucleoside and nucleotide derivatives of G to A nucleotides, and in maintaining the intracellular balance of A and G nucleotides. This Mesoplasma florum (strain ATCC 33453 / NBRC 100688 / NCTC 11704 / L1) (Acholeplasma florum) protein is GMP reductase.